The primary structure comprises 199 residues: MPIGVPSVPYRLPGSSFERWIDIYNRLAMERIIFLGQEVTDGLANSIVAQLLYLDSEDSSKPIYLYINSPGGSVTAGMAIYDTMQYIKSPVITICLGLAASMGAFLLCAGSKGKRLALPHSRIMIHQPLGGTGRRQASDIEIEAKEILRIKKLLNQIMADRTGQPLEKIEKDTDRDYFMSAEEAREYGLIDQVIAERPV.

Serine 101 acts as the Nucleophile in catalysis. Histidine 126 is a catalytic residue.

The protein belongs to the peptidase S14 family. As to quaternary structure, fourteen ClpP subunits assemble into 2 heptameric rings which stack back to back to give a disk-like structure with a central cavity, resembling the structure of eukaryotic proteasomes.

The protein localises to the cytoplasm. It carries out the reaction Hydrolysis of proteins to small peptides in the presence of ATP and magnesium. alpha-casein is the usual test substrate. In the absence of ATP, only oligopeptides shorter than five residues are hydrolyzed (such as succinyl-Leu-Tyr-|-NHMec, and Leu-Tyr-Leu-|-Tyr-Trp, in which cleavage of the -Tyr-|-Leu- and -Tyr-|-Trp bonds also occurs).. In terms of biological role, cleaves peptides in various proteins in a process that requires ATP hydrolysis. Has a chymotrypsin-like activity. Plays a major role in the degradation of misfolded proteins. This is ATP-dependent Clp protease proteolytic subunit 3 from Synechococcus elongatus (strain ATCC 33912 / PCC 7942 / FACHB-805) (Anacystis nidulans R2).